The chain runs to 191 residues: MDRKTRGRASKVDLLPENVRKTLHEMLRDKAIPQARILEEINALIEDAGLPDEMKLSRSGLNRYATNVEQVGHNLRQMREMTSALTAELGDKPMGETTKLILEMARSQLFKAMMRQIENPESDVDIDLLKNAMLAAQRLESTAMSSHRREKEIRQAFAEEAANAVSEELRGQDGISEELEQRIRDVLLGKA.

The protein belongs to the mulikevirus small terminase family. In terms of assembly, heterodimer with the terminase large subunit gp28; the active complex is probably heterooligomeric.

The protein localises to the host cytoplasm. The terminase small subunit binds to the packaging initiation site (pac) and regulates the ATPase activity of the terminase large subunit. The terminase lies at a unique vertex of the procapsid and is composed of two subunits, a small terminase subunit involved in viral DNA recognition (packaging sequence), and a large terminase subunit possessing endonucleolytic and ATPase activities. Both terminase subunits heterooligomerize and are docked on the portal protein to form the packaging machine. The terminase large subunit exhibits endonuclease activity and cleaves the viral genome concatemer once the capsid is full (headful packaging). Once the capsid is packaged with the DNA, the terminase complex is substituted by neck proteins. The protein is Probable terminase, small subunit gp27 of Enterobacteriaceae (Bacteriophage Mu).